The following is a 170-amino-acid chain: Photosystem I assembly protein Ycf3 (170 aa).

TPR repeat units lie at residues 35–68, 72–105, and 120–153; these read AFTYYRDGMSAQAEGEYAEALQNYYEAMRLEVDA, SYILYNIGLIHTSNGEHGRALEYYYQALERNPSL, and GEQAIENGQSEISQILFEKAADYWKEAIRLAPTN.

Belongs to the Ycf3 family.

Its subcellular location is the plastid. The protein localises to the chloroplast thylakoid membrane. Its function is as follows. Essential for the assembly of the photosystem I (PSI) complex. May act as a chaperone-like factor to guide the assembly of the PSI subunits. This is Photosystem I assembly protein Ycf3 from Tetradesmus obliquus (Green alga).